A 314-amino-acid chain; its full sequence is Elongation factor Ts (314 aa).

The tract at residues 82–85 is involved in Mg(2+) ion dislocation from EF-Tu; the sequence is TDFV.

It belongs to the EF-Ts family.

Its subcellular location is the cytoplasm. Its function is as follows. Associates with the EF-Tu.GDP complex and induces the exchange of GDP to GTP. It remains bound to the aminoacyl-tRNA.EF-Tu.GTP complex up to the GTP hydrolysis stage on the ribosome. The protein is Elongation factor Ts of Nostoc punctiforme (strain ATCC 29133 / PCC 73102).